Consider the following 98-residue polypeptide: ORF9b protein (98 aa).

The region spanning 9 to 98 (VPPALHLVDP…PDEFVVVTAK (90 aa)) is the 9b domain. The Nuclear export signal signature appears at 46 to 54 (ILRLGSQLS).

It belongs to the coronavirus group 2 protein 9b family. In terms of assembly, homodimer. Interacts with host XPO1; this interaction mediates protein ORF9b export out of the nucleus. Interacts with host MAVS. Interacts with protein ORF6.

It localises to the virion. Its subcellular location is the host cytoplasmic vesicle membrane. The protein resides in the host cytoplasm. It is found in the host endoplasmic reticulum. The protein localises to the host nucleus. It localises to the host mitochondrion. Functionally, plays a role in the inhibition of host innate immune response by targeting the mitochondrial-associated adapter MAVS. Mechanistically, usurps the E3 ligase ITCH to trigger the degradation of MAVS, TRAF3, and TRAF6. In addition, causes mitochondrial elongation by triggering ubiquitination and proteasomal degradation of dynamin-like protein 1/DNM1L. The sequence is that of ORF9b protein from Homo sapiens (Human).